Here is a 479-residue protein sequence, read N- to C-terminus: Muscarinic acetylcholine receptor M4 (479 aa).

Topologically, residues 1–30 are extracellular; the sequence is MANFTPVNGSSANQSVRLVTTAHNHLETVE. 2 N-linked (GlcNAc...) asparagine glycosylation sites follow: Asn8 and Asn13. Residues 31–53 form a helical membrane-spanning segment; it reads MVFIATVTGSLSLVTVVGNILVM. Topologically, residues 54–67 are cytoplasmic; that stretch reads LSIKVNRQLQTVNN. A helical transmembrane segment spans residues 68 to 88; the sequence is YFLFSLACADLIIGAFSMNLY. At 89–105 the chain is on the extracellular side; that stretch reads TLYIIKGYWPLGAVVCD. A disulfide bridge links Cys104 with Cys184. Residues 106-127 traverse the membrane as a helical segment; it reads LWLALDYVVSNASVMNLLIISF. Over 128–147 the chain is Cytoplasmic; it reads DRYFCVTKPLTYPARRTTKM. A helical membrane pass occupies residues 148–170; the sequence is AGLMIAAAWVLSFVLWAPAILFW. At 171 to 192 the chain is on the extracellular side; that stretch reads QFVVGKRTVPDNQCFIQFLSNP. A helical membrane pass occupies residues 193–215; that stretch reads AVTFGTAIAAFYLPVVIMTVLYI. Topologically, residues 216-401 are cytoplasmic; that stretch reads HISLASRSRV…AARERKVTRT (186 aa). Residues 271–334 form a disordered region; that stretch reads LEEAPPPALP…APTLQPRTLN (64 aa). Positions 274–285 are enriched in pro residues; the sequence is APPPALPPPPRP. The segment covering 293-303 has biased composition (polar residues); the sequence is NESSSGSATQN. A compositionally biased stretch (low complexity) spans 310-333; the sequence is TELSTTEAATTPALPAPTLQPRTL. A helical transmembrane segment spans residues 402–422; it reads IFAILLAFILTWTPYNVMVLV. Over 423–436 the chain is Extracellular; that stretch reads NTFCQSCIPERVWS. The chain crosses the membrane as a helical span at residues 437–456; sequence IGYWLCYVNSTINPACYALC. The Cytoplasmic segment spans residues 457 to 479; the sequence is NATFKKTFRHLLLCQYRNIGTAR. A phosphothreonine mark is found at Thr459, Thr463, and Thr477.

It belongs to the G-protein coupled receptor 1 family. Muscarinic acetylcholine receptor subfamily. CHRM4 sub-subfamily.

It is found in the cell membrane. The protein localises to the postsynaptic cell membrane. In terms of biological role, the muscarinic acetylcholine receptor mediates various cellular responses, including inhibition of adenylate cyclase, breakdown of phosphoinositides and modulation of potassium channels through the action of G proteins. Primary transducing effect is inhibition of adenylate cyclase. In Mus musculus (Mouse), this protein is Muscarinic acetylcholine receptor M4 (Chrm4).